Reading from the N-terminus, the 82-residue chain is Small ribosomal subunit protein bS16 (82 aa).

It belongs to the bacterial ribosomal protein bS16 family.

In Haemophilus influenzae (strain 86-028NP), this protein is Small ribosomal subunit protein bS16.